The primary structure comprises 288 residues: Galactose/N-acetyl-D-galactosamine lectin light subunit 1 (288 aa).

The N-terminal stretch at 1-15 is a signal peptide; the sequence is MIILVLLISYSFGKT. N-linked (GlcNAc...) asparagine glycosylation is found at Asn-205 and Asn-261.

As to quaternary structure, heterodimer composed of a 170 kDa heavy subunit (hgl) and a 31/35 kDa light subunit (lgl); disulfide-linked.

Its subcellular location is the cell membrane. Functionally, light subunit of a heterodimeric lectin; the heavy subunit binds galactose and N-acetyl-D-galactosamine of host glycoproteins and thus mediates adhesion to host cells. The protein is Galactose/N-acetyl-D-galactosamine lectin light subunit 1 of Entamoeba histolytica (strain ATCC 30459 / HM-1:IMSS / ABRM).